The primary structure comprises 626 residues: Threonine--tRNA ligase (626 aa).

The editing domain stretch occupies residues 1–145 (MRMLLIHSDY…SRTIVPEKAV (145 aa)). The tract at residues 207-506 (PHVRLMLEQE…QEKGIKPMYP (300 aa)) is catalytic. Zn(2+) is bound by residues Cys-299, His-351, and His-475.

The protein belongs to the class-II aminoacyl-tRNA synthetase family. In terms of assembly, homodimer. The cofactor is Zn(2+).

It is found in the cytoplasm. The enzyme catalyses tRNA(Thr) + L-threonine + ATP = L-threonyl-tRNA(Thr) + AMP + diphosphate + H(+). Its function is as follows. Catalyzes the attachment of threonine to tRNA(Thr) in a two-step reaction: L-threonine is first activated by ATP to form Thr-AMP and then transferred to the acceptor end of tRNA(Thr). Also edits incorrectly charged L-seryl-tRNA(Thr). This chain is Threonine--tRNA ligase, found in Thermococcus kodakarensis (strain ATCC BAA-918 / JCM 12380 / KOD1) (Pyrococcus kodakaraensis (strain KOD1)).